The chain runs to 301 residues: Probable 5-dehydro-4-deoxyglucarate dehydratase (301 aa).

This sequence belongs to the DapA family.

It carries out the reaction 5-dehydro-4-deoxy-D-glucarate + H(+) = 2,5-dioxopentanoate + CO2 + H2O. It participates in carbohydrate acid metabolism; D-glucarate degradation; 2,5-dioxopentanoate from D-glucarate: step 2/2. This Rhizobium meliloti (strain 1021) (Ensifer meliloti) protein is Probable 5-dehydro-4-deoxyglucarate dehydratase.